The following is a 177-amino-acid chain: Large ribosomal subunit protein uL6 (177 aa).

The protein belongs to the universal ribosomal protein uL6 family. Part of the 50S ribosomal subunit.

This protein binds to the 23S rRNA, and is important in its secondary structure. It is located near the subunit interface in the base of the L7/L12 stalk, and near the tRNA binding site of the peptidyltransferase center. The chain is Large ribosomal subunit protein uL6 from Histophilus somni (strain 2336) (Haemophilus somnus).